The chain runs to 605 residues: DNA primase (605 aa).

The CHC2-type zinc finger occupies 38 to 62 (CPFHDEKTPSFTVSEDKQICHCFGC). The 82-residue stretch at 260-341 (DEIVLLEGFM…NVFVIQLPSG (82 aa)) folds into the Toprim domain. Positions 266, 310, and 312 each coordinate Mg(2+).

Belongs to the DnaG primase family. In terms of assembly, monomer. Interacts with DnaB. Requires Zn(2+) as cofactor. Mg(2+) is required as a cofactor.

It catalyses the reaction ssDNA + n NTP = ssDNA/pppN(pN)n-1 hybrid + (n-1) diphosphate.. Functionally, RNA polymerase that catalyzes the synthesis of short RNA molecules used as primers for DNA polymerase during DNA replication. The sequence is that of DNA primase from Staphylococcus aureus.